Here is an 895-residue protein sequence, read N- to C-terminus: Putative endoplasmic reticulum metallopeptidase 1-B (895 aa).

The segment at Met1 to Thr27 is disordered. The Cytoplasmic segment spans residues Met1 to Arg39. A compositionally biased stretch (basic and acidic residues) spans His9–Thr27. The helical transmembrane segment at Pro40 to Leu60 threads the bilayer. At His61 to Thr374 the chain is on the lumenal side. A glycan (N-linked (GlcNAc...) asparagine) is linked at Asn156. Zn(2+) contacts are provided by His180 and Asp192. Catalysis depends on Glu226, which acts as the Proton acceptor. Residues Glu227, Glu253, and His329 each coordinate Zn(2+). A helical membrane pass occupies residues Val375 to Val395. At Asn396 to Asp424 the chain is on the cytoplasmic side. A helical transmembrane segment spans residues Tyr425–Phe445. Residues Thr446–Trp457 are Lumenal-facing. The helical transmembrane segment at Leu458–Leu478 threads the bilayer. At Thr479–Glu489 the chain is on the cytoplasmic side. A helical transmembrane segment spans residues Tyr490 to Tyr512. The Lumenal segment spans residues Asp513–Ala515. A helical membrane pass occupies residues Ser516–Trp538. Residues Pro539–Ser553 lie on the Cytoplasmic side of the membrane. A helical membrane pass occupies residues Phe554 to Ile574. Over Met575–Pro584 the chain is Lumenal. Residues Ala585–Val605 form a helical membrane-spanning segment. Residues Ala606–Leu619 lie on the Cytoplasmic side of the membrane. The helical transmembrane segment at Leu620 to Phe640 threads the bilayer. The Lumenal portion of the chain corresponds to Ser641–Phe895. 2 N-linked (GlcNAc...) asparagine glycosylation sites follow: Asn679 and Asn796.

Belongs to the peptidase M28 family. Requires Zn(2+) as cofactor.

It localises to the endoplasmic reticulum membrane. The sequence is that of Putative endoplasmic reticulum metallopeptidase 1-B from Caenorhabditis elegans.